The sequence spans 136 residues: Phospholipase A2 (136 aa).

The Ca(2+) site is built by tryptophan 8, glycine 10, and glycine 12. 5 cysteine pairs are disulfide-bonded: cysteine 9-cysteine 31, cysteine 30-cysteine 70, cysteine 37-cysteine 63, cysteine 61-cysteine 95, and cysteine 105-cysteine 117. Asparagine 16 is a glycosylation site (N-linked (GlcNAc...) asparagine). Histidine 34 is an active-site residue. Aspartate 35 is a Ca(2+) binding site. Residue aspartate 64 is part of the active site.

It belongs to the phospholipase A2 family. It depends on Ca(2+) as a cofactor. As to expression, expressed by the venom gland.

Its subcellular location is the secreted. It catalyses the reaction a 1,2-diacyl-sn-glycero-3-phosphocholine + H2O = a 1-acyl-sn-glycero-3-phosphocholine + a fatty acid + H(+). In terms of biological role, PLA2 catalyzes the calcium-dependent hydrolysis of the 2-acyl groups in 3-sn-phosphoglycerides. The sequence is that of Phospholipase A2 from Bombus terrestris (Buff-tailed bumblebee).